The primary structure comprises 546 residues: Methionine--tRNA ligase (546 aa).

The 'HIGH' region signature appears at 15–25; sequence PYANGPIHLGH. C146, C149, C159, and C162 together coordinate Zn(2+). A 'KMSKS' region motif is present at residues 332–336; it reads KMSKS. K335 serves as a coordination point for ATP.

The protein belongs to the class-I aminoacyl-tRNA synthetase family. MetG type 1 subfamily. As to quaternary structure, monomer. It depends on Zn(2+) as a cofactor.

The protein resides in the cytoplasm. It catalyses the reaction tRNA(Met) + L-methionine + ATP = L-methionyl-tRNA(Met) + AMP + diphosphate. Is required not only for elongation of protein synthesis but also for the initiation of all mRNA translation through initiator tRNA(fMet) aminoacylation. This is Methionine--tRNA ligase from Coxiella burnetii (strain Dugway 5J108-111).